Reading from the N-terminus, the 89-residue chain is Small ribosomal subunit protein uS15 (89 aa).

Positions 1-21 (MSVDAETKTKIIKDNARDKND) are enriched in basic and acidic residues. Residues 1–26 (MSVDAETKTKIIKDNARDKNDTGSPE) are disordered.

This sequence belongs to the universal ribosomal protein uS15 family. In terms of assembly, part of the 30S ribosomal subunit. Forms a bridge to the 50S subunit in the 70S ribosome, contacting the 23S rRNA.

Its function is as follows. One of the primary rRNA binding proteins, it binds directly to 16S rRNA where it helps nucleate assembly of the platform of the 30S subunit by binding and bridging several RNA helices of the 16S rRNA. Forms an intersubunit bridge (bridge B4) with the 23S rRNA of the 50S subunit in the ribosome. This Erythrobacter litoralis (strain HTCC2594) protein is Small ribosomal subunit protein uS15.